Reading from the N-terminus, the 206-residue chain is VEL1-related protein SCY_5430 (206 aa).

A signal peptide spans 1-19; sequence MSFLNIFTFFSVLVSVATA.

Belongs to the VEL1 family.

It is found in the cytoplasm. It localises to the cytosol. In Saccharomyces cerevisiae (strain YJM789) (Baker's yeast), this protein is VEL1-related protein SCY_5430.